We begin with the raw amino-acid sequence, 248 residues long: 5'-nucleotidase SurE (248 aa).

A divalent metal cation-binding residues include Asp-8, Asp-9, Ser-39, and Asn-91.

The protein belongs to the SurE nucleotidase family. A divalent metal cation is required as a cofactor.

Its subcellular location is the cytoplasm. It catalyses the reaction a ribonucleoside 5'-phosphate + H2O = a ribonucleoside + phosphate. Functionally, nucleotidase that shows phosphatase activity on nucleoside 5'-monophosphates. In Neisseria meningitidis serogroup C (strain 053442), this protein is 5'-nucleotidase SurE.